The primary structure comprises 308 residues: Mitochondrial brown fat uncoupling protein 1 (308 aa).

Residues 1–10 (MVASAEADVP) lie on the Mitochondrial intermembrane side of the membrane. A helical membrane pass occupies residues 11-33 (PPTMLVKIASAGLSACLADIITF). 3 Solcar repeats span residues 11 to 103 (PPTM…VQEY), 112 to 202 (ATLG…LKEA), and 211 to 296 (DDIP…LKKE). Topologically, residues 34 to 74 (PLDTAKVRLQVQGERPNAPGVKYKGVLGTIATVAKTEGPLK) are mitochondrial matrix. Lys57 provides a ligand contact to fatty acid 16:0. Residues 75–97 (LYGGLPAGIQRQISFASLRIGLY) traverse the membrane as a helical segment. Over 98–117 (DTVQEYFNAHRKTPATLGNK) the chain is Mitochondrial intermembrane. A helical transmembrane segment spans residues 118–134 (ISAGLMTGCVTVFIGQP). Residues 135 to 179 (TEVAKVRMQAQSSLHWLKPRYSGTYNAYYVIVKTEGFLGLWKGTS) are Mitochondrial matrix-facing. The chain crosses the membrane as a helical span at residues 180–196 (LNLTRNVIINCTELVVY). The Mitochondrial intermembrane portion of the chain corresponds to 197–213 (DVLKEALVKNNVLADDI). The helical transmembrane segment at 214–233 (PCHLLAALTAGFCTTALASP) threads the bilayer. At 234 to 267 (VDVVKTRFINSPPGYYPHVHNCALNMLQKEGLRA) the chain is on the mitochondrial matrix side. Cys255 carries the cysteine sulfenic acid (-SOH) modification. A helical membrane pass occupies residues 268–290 (FFKGFVPSFLRLGSWTVIMHVTF). Lys270 is a binding site for fatty acid 16:0. The Mitochondrial intermembrane segment spans residues 291–308 (EQLKKELMKSRQTVDCAT).

It belongs to the mitochondrial carrier (TC 2.A.29) family. In terms of assembly, most probably functions as a monomer. Binds one purine nucleotide per monomer. However, has also been suggested to function as a homodimer or a homotetramer. Tightly associates with cardiolipin in the mitochondrion inner membrane; may stabilize and regulate its activity. In terms of processing, may undergo sulfenylation upon cold exposure. May increase the sensitivity of UCP1 thermogenic function to the activation by noradrenaline probably through structural effects. Post-translationally, may undergo ubiquitin-mediated proteasomal degradation. As to expression, brown adipose tissue.

It localises to the mitochondrion inner membrane. The catalysed reaction is H(+)(in) = H(+)(out). Its activity is regulated as follows. Has no constitutive proton transporter activity and has to be activated by long-chain fatty acids/LCFAs. Inhibited by purine nucleotides. Both purine nucleotides and LCFAs bind the cytosolic side of the transporter and directly compete to activate or inhibit it. Activated by noradrenaline and reactive oxygen species. Despite lacking canonical translational encoding for selenocysteine, a small pool of the protein has been observed to selectively incorporate selenocysteine at 'Cys-255'. Selenocysteine-modified protein is highly sensitive to redox modification and may constitute a pool of protein highly sensitive to activation by elevated levels of reactive oxygen species (ROS). Functionally, mitochondrial protein responsible for thermogenic respiration, a specialized capacity of brown adipose tissue and beige fat that participates in non-shivering adaptive thermogenesis to temperature and diet variations and more generally to the regulation of energy balance. Functions as a long-chain fatty acid/LCFA and proton symporter, simultaneously transporting one LCFA and one proton through the inner mitochondrial membrane. However, LCFAs remaining associated with the transporter via their hydrophobic tails, it results in an apparent transport of protons activated by LCFAs. Thereby, dissipates the mitochondrial proton gradient and converts the energy of substrate oxydation into heat instead of ATP. Regulates the production of reactive oxygen species/ROS by mitochondria. This chain is Mitochondrial brown fat uncoupling protein 1, found in Suncus murinus (Asian house shrew).